We begin with the raw amino-acid sequence, 90 residues long: Small ribosomal subunit protein uS15 (90 aa).

Belongs to the universal ribosomal protein uS15 family. Part of the 30S ribosomal subunit. Forms a bridge to the 50S subunit in the 70S ribosome, contacting the 23S rRNA.

Its function is as follows. One of the primary rRNA binding proteins, it binds directly to 16S rRNA where it helps nucleate assembly of the platform of the 30S subunit by binding and bridging several RNA helices of the 16S rRNA. Forms an intersubunit bridge (bridge B4) with the 23S rRNA of the 50S subunit in the ribosome. The sequence is that of Small ribosomal subunit protein uS15 from Blochmanniella floridana.